We begin with the raw amino-acid sequence, 206 residues long: MIVIIDYGMGNLRSVQKGFEKVGYSARVTDDPAVVAQADKLVLPGVGAFRDCMDQLTAGGFVEPILRHVESGRPFLGICLGLQLLFTESEEFGHHQGLNIIPGRVVRFPGDMQEQGEVLKVPHMGWNQIDIQRPAPIFQGLDSGESVYFVHSYYVVPEDASVVAATADYGRTFCAAVWRDNVMATQFHPEKSQQVGLRILKNFGDM.

The Glutamine amidotransferase type-1 domain maps to 1–206 (MIVIIDYGMG…LRILKNFGDM (206 aa)). Cysteine 79 acts as the Nucleophile in catalysis. Catalysis depends on residues histidine 188 and glutamate 190.

Heterodimer of HisH and HisF.

The protein localises to the cytoplasm. The catalysed reaction is 5-[(5-phospho-1-deoxy-D-ribulos-1-ylimino)methylamino]-1-(5-phospho-beta-D-ribosyl)imidazole-4-carboxamide + L-glutamine = D-erythro-1-(imidazol-4-yl)glycerol 3-phosphate + 5-amino-1-(5-phospho-beta-D-ribosyl)imidazole-4-carboxamide + L-glutamate + H(+). It carries out the reaction L-glutamine + H2O = L-glutamate + NH4(+). Its pathway is amino-acid biosynthesis; L-histidine biosynthesis; L-histidine from 5-phospho-alpha-D-ribose 1-diphosphate: step 5/9. In terms of biological role, IGPS catalyzes the conversion of PRFAR and glutamine to IGP, AICAR and glutamate. The HisH subunit catalyzes the hydrolysis of glutamine to glutamate and ammonia as part of the synthesis of IGP and AICAR. The resulting ammonia molecule is channeled to the active site of HisF. This chain is Imidazole glycerol phosphate synthase subunit HisH, found in Syntrophotalea carbinolica (strain DSM 2380 / NBRC 103641 / GraBd1) (Pelobacter carbinolicus).